Consider the following 209-residue polypeptide: Na(+)-translocating NADH-quinone reductase subunit D (209 aa).

The next 5 helical transmembrane spans lie at 42–62 (LVMT…ISLI), 72–92 (IIVQ…ILQA), 103–123 (VFVG…AYAM), 131–151 (FMDG…VGFL), and 178–198 (NGLF…IWGL).

It belongs to the NqrDE/RnfAE family. In terms of assembly, composed of six subunits; NqrA, NqrB, NqrC, NqrD, NqrE and NqrF.

Its subcellular location is the cell inner membrane. It carries out the reaction a ubiquinone + n Na(+)(in) + NADH + H(+) = a ubiquinol + n Na(+)(out) + NAD(+). Functionally, NQR complex catalyzes the reduction of ubiquinone-1 to ubiquinol by two successive reactions, coupled with the transport of Na(+) ions from the cytoplasm to the periplasm. NqrA to NqrE are probably involved in the second step, the conversion of ubisemiquinone to ubiquinol. The sequence is that of Na(+)-translocating NADH-quinone reductase subunit D from Photorhabdus laumondii subsp. laumondii (strain DSM 15139 / CIP 105565 / TT01) (Photorhabdus luminescens subsp. laumondii).